A 1024-amino-acid polypeptide reads, in one-letter code: MTMITDSLAVVLQRRDWENPGVTQLNRLAAHPPFASWRNSEEARTDRPSQQLRSLNGEWRFAWFPAPEAVPESWLECDLPEADTVVVPSNWQMHGYDAPIYTNVTYPITVNPPFVPTENPTGCYSLTFNVDESWLQEGQTRIIFDGVNSAFHLWCNGRWVGYGQDSRLPSEFDLSAFLRAGENRLAVMVLRWSDGSYLEDQDMWRMSGIFRDVSLLHKPTTQISDFHVATRFNDDFSRAVLEAEVQMCGELRDYLRVTVSLWQGETQVASGTAPFGGEIIDERGSYADRVTLRLNVENPKLWSAEIPNLYRAVVELHTADGTLIEAEACDVGFREVRIENGLLLLNGKPLLIRGVNRHEHHPLHGQVMDEQTMVQDILLMKQNNFNAVRCSHYPNHPLWYTLCDRYGLYVVDEANIETHGMVPMNRLTDDPRWLPAMSERVTRMVQRDRNHPSVIIWSLGNESGHGANHDALYRWIKSVDPSRPVQYEGGGADTTATDIICPMYARVDEDQPFPAVPKWSIKKWLSLPGETRPLILCEYAHAMGNSLGGFAKYWQAFRQYPRLQGGFVWDWVDQSLIKYDENGNPWSAYGGDFGDTPNDRQFCMNGLVFADRTPHPALTEAKHQQQFFQFRLSGQTIEVTSEYLFRHSDNELLHWMVALDGKPLASGEVPLDVAPQGKQLIELPELPQPESAGQLWLTVRVVQPNATAWSEAGHISAWQQWRLAENLSVTLPSASHIIPQLTTSETDFCIELGNKRWQFNRQSGLLSQMWIGDEKQLLTPLRDQFTRAPLDNDIGVSEATRIDPNAWVERWKAAGHYQAEAALLQCTADTLADAVLITTAHAWQHQGKTLFISRKTYRIDGSGQMAITVDVEVASDTPHPARIGLTCQLAQVAERVNWLGLGPQENYPDRLTAACFDRWDVPLSDMYTPYVFPSENGLRCGTRELNYGSHQWRGDFQFNISRYSQQQLMETSHRHLLHAEEGTWLNIDGFHMGIGGDDSWSPSVSAEFQLSAGRYHYQLVWCQK.

2 residues coordinate substrate: Asn-103 and Asp-202. Asp-202 lines the Na(+) pocket. Residues Glu-417, His-419, and Glu-462 each contribute to the Mg(2+) site. Substrate is bound by residues Glu-462 and 538 to 541 (EYAH). Glu-462 acts as the Proton donor in catalysis. Catalysis depends on Glu-538, which acts as the Nucleophile. Residue Asn-598 participates in Mg(2+) binding. Residues Phe-602 and Asn-605 each contribute to the Na(+) site. Residues Asn-605 and Trp-1000 each contribute to the substrate site.

It belongs to the glycosyl hydrolase 2 family. Homotetramer. Mg(2+) serves as cofactor. Requires Na(+) as cofactor.

It carries out the reaction Hydrolysis of terminal non-reducing beta-D-galactose residues in beta-D-galactosides.. The sequence is that of Beta-galactosidase from Escherichia coli O9:H4 (strain HS).